We begin with the raw amino-acid sequence, 364 residues long: Programmed cell death protein 2-like (364 aa).

The residue at position 2 (alanine 2) is an N-acetylalanine. Residues 125 to 150 are disordered; it reads EGSQDWGSDTEETPPPPASDLGSDSN.

Over-expression suppresses AP1, CREB, NFAT, and NF-kB transcriptional activation, and delays cell cycle progression at S phase. This is Programmed cell death protein 2-like (Pdcd2l) from Mus musculus (Mouse).